The chain runs to 175 residues: Mitochondrial inner membrane protease subunit 2 (175 aa).

The chain crosses the membrane as a helical span at residues 19–37 (FFVAVPVAVTFLDRVACVA). Active-site residues include Ser43 and Lys91.

The protein belongs to the peptidase S26 family. IMP2 subfamily. Heterodimer of 2 subunits, IMMPL1 and IMMPL2.

The protein localises to the mitochondrion inner membrane. In terms of biological role, catalyzes the removal of transit peptides required for the targeting of proteins from the mitochondrial matrix, across the inner membrane, into the inter-membrane space. Known to process the nuclear encoded protein DIABLO. This chain is Mitochondrial inner membrane protease subunit 2 (Immp2l), found in Mus musculus (Mouse).